A 313-amino-acid chain; its full sequence is Ribose 1,5-bisphosphate isomerase (313 aa).

Substrate-binding positions include 17-20 and arginine 57; that span reads RGAA. The active-site Proton acceptor is cysteine 121. The Proton donor role is filled by aspartate 190. Substrate is bound by residues 200-201 and lysine 226; that span reads NK.

The protein belongs to the eIF-2B alpha/beta/delta subunits family. R15P isomerase subfamily.

The enzyme catalyses alpha-D-ribose 1,5-bisphosphate = D-ribulose 1,5-bisphosphate. Functionally, catalyzes the isomerization of ribose 1,5-bisphosphate (R15P) to ribulose 1,5-bisphosphate (RuBP), the CO(2) acceptor and substrate for RubisCO. Functions in an archaeal AMP degradation pathway, together with AMP phosphorylase and RubisCO. This chain is Ribose 1,5-bisphosphate isomerase, found in Archaeoglobus fulgidus (strain ATCC 49558 / DSM 4304 / JCM 9628 / NBRC 100126 / VC-16).